We begin with the raw amino-acid sequence, 308 residues long: uncharacterized protein (308 aa).

The signal sequence occupies residues 1-19 (MKLLLILILIINNYNLCLS). Asn-25 and Asn-300 each carry an N-linked (GlcNAc...) asparagine glycan.

The protein localises to the secreted. This is an uncharacterized protein from Dictyostelium discoideum (Social amoeba).